The chain runs to 426 residues: Dihydroorotase (426 aa).

Residues His-62 and His-64 each contribute to the Zn(2+) site. Substrate is bound by residues 64-66 (HLR) and Asn-96. Residues Asp-154, His-181, and His-234 each coordinate Zn(2+). Asn-280 contributes to the substrate binding site. Asp-307 contacts Zn(2+). The active site involves Asp-307. Residues His-311 and 325–326 (FG) each bind substrate.

The protein belongs to the metallo-dependent hydrolases superfamily. DHOase family. Class I DHOase subfamily. Zn(2+) serves as cofactor.

It catalyses the reaction (S)-dihydroorotate + H2O = N-carbamoyl-L-aspartate + H(+). The protein operates within pyrimidine metabolism; UMP biosynthesis via de novo pathway; (S)-dihydroorotate from bicarbonate: step 3/3. Its function is as follows. Catalyzes the reversible cyclization of carbamoyl aspartate to dihydroorotate. The sequence is that of Dihydroorotase from Desulforapulum autotrophicum (strain ATCC 43914 / DSM 3382 / VKM B-1955 / HRM2) (Desulfobacterium autotrophicum).